Reading from the N-terminus, the 302-residue chain is Lipoyl synthase (302 aa).

[4Fe-4S] cluster contacts are provided by Cys44, Cys49, Cys55, Cys70, Cys74, Cys77, and Ser283. The Radical SAM core domain occupies 56 to 272 (WSKKHATVMI…AKVARSKGFL (217 aa)).

Belongs to the radical SAM superfamily. Lipoyl synthase family. It depends on [4Fe-4S] cluster as a cofactor.

Its subcellular location is the cytoplasm. It catalyses the reaction [[Fe-S] cluster scaffold protein carrying a second [4Fe-4S](2+) cluster] + N(6)-octanoyl-L-lysyl-[protein] + 2 oxidized [2Fe-2S]-[ferredoxin] + 2 S-adenosyl-L-methionine + 4 H(+) = [[Fe-S] cluster scaffold protein] + N(6)-[(R)-dihydrolipoyl]-L-lysyl-[protein] + 4 Fe(3+) + 2 hydrogen sulfide + 2 5'-deoxyadenosine + 2 L-methionine + 2 reduced [2Fe-2S]-[ferredoxin]. It functions in the pathway protein modification; protein lipoylation via endogenous pathway; protein N(6)-(lipoyl)lysine from octanoyl-[acyl-carrier-protein]: step 2/2. In terms of biological role, catalyzes the radical-mediated insertion of two sulfur atoms into the C-6 and C-8 positions of the octanoyl moiety bound to the lipoyl domains of lipoate-dependent enzymes, thereby converting the octanoylated domains into lipoylated derivatives. The sequence is that of Lipoyl synthase from Orientia tsutsugamushi (strain Boryong) (Rickettsia tsutsugamushi).